A 403-amino-acid polypeptide reads, in one-letter code: Phosphopentomutase (403 aa).

Residues Asp-13, Asp-298, His-303, Asp-339, His-340, and His-351 each contribute to the Mn(2+) site.

This sequence belongs to the phosphopentomutase family. Mn(2+) serves as cofactor.

It is found in the cytoplasm. It carries out the reaction 2-deoxy-alpha-D-ribose 1-phosphate = 2-deoxy-D-ribose 5-phosphate. It catalyses the reaction alpha-D-ribose 1-phosphate = D-ribose 5-phosphate. It functions in the pathway carbohydrate degradation; 2-deoxy-D-ribose 1-phosphate degradation; D-glyceraldehyde 3-phosphate and acetaldehyde from 2-deoxy-alpha-D-ribose 1-phosphate: step 1/2. Functionally, isomerase that catalyzes the conversion of deoxy-ribose 1-phosphate (dRib-1-P) and ribose 1-phosphate (Rib-1-P) to deoxy-ribose 5-phosphate (dRib-5-P) and ribose 5-phosphate (Rib-5-P), respectively. This Streptococcus thermophilus (strain CNRZ 1066) protein is Phosphopentomutase.